Consider the following 448-residue polypeptide: 26S proteasome regulatory subunit 4 homolog (448 aa).

Residues 1–16 (MGQGTPGGMGKQGGAP) show a composition bias toward gly residues. Disordered stretches follow at residues 1-56 (MGQG…AAAR) and 93-112 (LRPTEDKTEEDRSKVDDLRG). 2 stretches are compositionally biased toward basic and acidic residues: residues 17 to 33 (GDRKPGGDGDKKDRKFE) and 93 to 111 (LRPTEDKTEEDRSKVDDLR). Residue 234–241 (GEPGTGKT) coordinates ATP.

It belongs to the AAA ATPase family.

The protein resides in the cytoplasm. Its subcellular location is the nucleus. The 26S proteasome is involved in the ATP-dependent degradation of ubiquitinated proteins. The regulatory (or ATPase) complex confers ATP dependency and substrate specificity to the 26S complex. This Oryza sativa subsp. japonica (Rice) protein is 26S proteasome regulatory subunit 4 homolog (TBP2).